We begin with the raw amino-acid sequence, 204 residues long: Recombination protein RecR (204 aa).

The C4-type zinc finger occupies 58–75 (CSVCQNITDLGVDPCHIC). The Toprim domain occupies 83-181 (SVICVVESPT…NVTRIARGIP (99 aa)).

Belongs to the RecR family.

In terms of biological role, may play a role in DNA repair. It seems to be involved in an RecBC-independent recombinational process of DNA repair. It may act with RecF and RecO. This chain is Recombination protein RecR, found in Chlorobaculum tepidum (strain ATCC 49652 / DSM 12025 / NBRC 103806 / TLS) (Chlorobium tepidum).